We begin with the raw amino-acid sequence, 545 residues long: Chaperonin GroEL (545 aa).

Residues 30-33 (TLGP), lysine 51, 87-91 (DGTTT), glycine 413, 477-479 (NAA), and aspartate 493 contribute to the ATP site.

It belongs to the chaperonin (HSP60) family. In terms of assembly, forms a cylinder of 14 subunits composed of two heptameric rings stacked back-to-back. Interacts with the co-chaperonin GroES.

Its subcellular location is the cytoplasm. The enzyme catalyses ATP + H2O + a folded polypeptide = ADP + phosphate + an unfolded polypeptide.. Its function is as follows. Together with its co-chaperonin GroES, plays an essential role in assisting protein folding. The GroEL-GroES system forms a nano-cage that allows encapsulation of the non-native substrate proteins and provides a physical environment optimized to promote and accelerate protein folding. This Pseudomonas putida (Arthrobacter siderocapsulatus) protein is Chaperonin GroEL.